The following is a 346-amino-acid chain: Annexin A1 (346 aa).

Ala2 carries the N-acetylalanine modification. Ser5 is subject to Phosphoserine; by TRPM7. Gln19 is covalently cross-linked (Isoglutamyl lysine isopeptide (Gln-Lys) (interchain with K-?)). Tyr21 is modified (phosphotyrosine; by EGFR). Ser27 carries the phosphoserine; by PKC modification. Ser34 and Ser37 each carry phosphoserine. Annexin repeat units lie at residues 42–113 (FNPS…AMLK), 114–185 (TPAQ…ALAK), 197–269 (DLAD…TIVK), and 273–344 (STPA…ALCG). An N6-acetyllysine modification is found at Lys58. Residues Gly59, Val60, Glu62, Lys97, Leu100, Glu105, Met127, Gly129, Gly131, Thr132, and Glu134 each coordinate Ca(2+). Thr136 is subject to Phosphothreonine. Ca(2+) contacts are provided by Asp171, Gly210, and Arg213. Lys214 participates in a covalent cross-link: Glycyl lysine isopeptide (Lys-Gly) (interchain with G-Cter in SUMO1); alternate. Residue Lys214 forms a Glycyl lysine isopeptide (Lys-Gly) (interchain with G-Cter in SUMO2); alternate linkage. The Ca(2+) site is built by Gly215, Asp253, Glu255, and Leu256. Lys257 participates in a covalent cross-link: Glycyl lysine isopeptide (Lys-Gly) (interchain with G-Cter in SUMO1). The Ca(2+) site is built by Glu261, Met286, Gly288, and Gly290. Lys312 bears the N6-acetyllysine mark. Cys324 and Cys343 are joined by a disulfide. Ca(2+) contacts are provided by Leu328, Glu330, and Thr331. Residue Lys332 forms a Glycyl lysine isopeptide (Lys-Gly) (interchain with G-Cter in SUMO1) linkage. Residue Glu336 coordinates Ca(2+).

It belongs to the annexin family. In terms of assembly, homodimer; non-covalently linked. Homodimer; linked by transglutamylation. Homodimers linked by transglutamylation are observed in placenta, but not in other tissues. Interacts with S100A11. Heterotetramer, formed by two molecules each of S100A11 and ANXA1. Interacts with DYSF. Interacts with EGFR. Post-translationally, phosphorylated by protein kinase C, EGFR and TRPM7. Phosphorylated in response to EGF treatment. In terms of processing, sumoylated. Proteolytically cleaved by cathepsin CTSG to release the active N-terminal peptide Ac2-26. In terms of tissue distribution, detected in eosinophils. Detected in lung, placenta, spleen and thymus (at protein level).

It is found in the nucleus. The protein localises to the cytoplasm. Its subcellular location is the cell projection. The protein resides in the cilium. It localises to the basolateral cell membrane. It is found in the lateral cell membrane. The protein localises to the cell membrane. Its subcellular location is the apical cell membrane. The protein resides in the membrane. It localises to the endosome membrane. It is found in the secreted. The protein localises to the extracellular space. Its subcellular location is the early endosome. The protein resides in the cytoplasmic vesicle membrane. It localises to the extracellular exosome. It is found in the cytoplasmic vesicle. The protein localises to the secretory vesicle lumen. Its subcellular location is the phagocytic cup. In terms of biological role, plays important roles in the innate immune response as effector of glucocorticoid-mediated responses and regulator of the inflammatory process. Has anti-inflammatory activity. Plays a role in glucocorticoid-mediated down-regulation of the early phase of the inflammatory response. Contributes to the adaptive immune response by enhancing signaling cascades that are triggered by T-cell activation, regulates differentiation and proliferation of activated T-cells. Promotes the differentiation of T-cells into Th1 cells and negatively regulates differentiation into Th2 cells. Has no effect on unstimulated T-cells. Negatively regulates hormone exocytosis via activation of the formyl peptide receptors and reorganization of the actin cytoskeleton. Has high affinity for Ca(2+) and can bind up to eight Ca(2+) ions. Displays Ca(2+)-dependent binding to phospholipid membranes. Plays a role in the formation of phagocytic cups and phagosomes. Plays a role in phagocytosis by mediating the Ca(2+)-dependent interaction between phagosomes and the actin cytoskeleton. Functions at least in part by activating the formyl peptide receptors and downstream signaling cascades. Promotes chemotaxis of granulocytes and monocytes via activation of the formyl peptide receptors. Promotes rearrangement of the actin cytoskeleton, cell polarization and cell migration. Promotes resolution of inflammation and wound healing. Acts via neutrophil N-formyl peptide receptors to enhance the release of CXCL2. This is Annexin A1 (Anxa1) from Rattus norvegicus (Rat).